We begin with the raw amino-acid sequence, 309 residues long: DDRGK domain-containing protein 1 (309 aa).

Over 1–2 (MD) the chain is Lumenal. A helical membrane pass occupies residues 3–23 (LIILVGIAVALLVVIVTLYLL). Residues 24 to 309 (QKKNAAPETK…ISAGGGEASS (286 aa)) lie on the Cytoplasmic side of the membrane. Disordered regions lie at residues 32 to 53 (TKVA…VPRR) and 79 to 175 (ALPA…KEER). Residues 87–96 (DHEDEGQVDG) are compositionally biased toward acidic residues. Residues 107-175 (LDEKMGAKKR…DAERLAKEER (69 aa)) show a composition bias toward basic and acidic residues. The stretch at 120 to 177 (EAKEQKRLQREQELHDREQRKVKEAKEEAERKQQEDLEAEAERKRVDAERLAKEERER) forms a coiled coil.

This sequence belongs to the DDRGK1 family. In terms of assembly, interacts with Atg9; the interaction is transient.

The protein localises to the endoplasmic reticulum membrane. Functionally, substrate adapter for ufmylation, the covalent attachment of the ubiquitin-like modifier UFM1 to substrate proteins. Required for ufmylation of Atg9; protects the nervous system during aging, possibly by stabilizing Atg9 and supporting its function. The chain is DDRGK domain-containing protein 1 from Drosophila melanogaster (Fruit fly).